The following is a 408-amino-acid chain: Serine/threonine-protein kinase ATG1t (408 aa).

The 266-residue stretch at 7–272 (YIAKSKLSES…GRIKNSRVWV (266 aa)) folds into the Protein kinase domain. ATP is bound by residues 13 to 21 (LSESLTSTV) and Lys36. Asp129 (proton acceptor) is an active-site residue.

Belongs to the protein kinase superfamily. Ser/Thr protein kinase family.

It localises to the cytoplasmic vesicle. Its subcellular location is the autophagosome. In terms of biological role, serine/threonine protein kinase involved in autophagy. The ATG1-ATG13 protein kinase complex regulates downstream events required for autophagosome enclosure and/or vacuolar delivery. In Arabidopsis thaliana (Mouse-ear cress), this protein is Serine/threonine-protein kinase ATG1t.